A 296-amino-acid chain; its full sequence is Probable AP endonuclease (296 aa).

A disulfide bond links Cys-16 and Cys-20. His-78, His-115, Glu-142, His-182, His-218, Asp-231, His-233, and Glu-271 together coordinate Zn(2+).

It belongs to the AP endonuclease 2 family. Zn(2+) serves as cofactor.

The protein resides in the host nucleus. The protein localises to the host cytoplasm. It is found in the virion. Functionally, endonuclease that plays a role in DNA repair. Cleaves phosphodiester bonds on the 5' side of apurinic or apyrimidinic sites (AP sites). In addition to endonuclease activity, the ASFV enzyme has a proofreading 3'-5' exonuclease activity that is considerably more efficient in the elimination of a mismatch than in that of a correctly paired base. Displays 3'-phosphatase and 3'-repair diesterase activities. The single nucleotide gaps generated by the AP endonuclease are filled by the viral AP endonuclease and DNA ligase. The polypeptide is Probable AP endonuclease (Ornithodoros (relapsing fever ticks)).